The primary structure comprises 281 residues: Para-Rep C9 (281 aa).

Residues 1–95 (MSAVNWVFTL…VAGPWSYGEL (95 aa)) enclose the CRESS-DNA virus Rep endonuclease domain. The RCR-1 signature appears at 7 to 10 (VFTL). The a divalent metal cation site is built by E33 and H39. Positions 39–41 (HIQ) match the RCR-2 motif. Residues 48–69 (KKAKMNTVKNIIGGNPHLEKMK) carry the Nuclear localization signal motif. The For DNA cleavage activity role is filled by Y78. The short motif at 78–81 (YAQK) is the RCR-3 element. E83 is a binding site for a divalent metal cation. The short motif at 95–101 (LLKKGSH) is the Nuclear localization signal element. 178-180 (GKS) contacts ATP.

It belongs to the nanoviridea/circoviridae replication-associated protein family. Homooligomer (Potential). Rep binds to repeated DNA motifs (iterons). Requires Mg(2+) as cofactor. Mn(2+) is required as a cofactor.

It is found in the host nucleus. The catalysed reaction is ATP + H2O = ADP + phosphate + H(+). Functionally, initiates and terminates the replication only of its own subviral DNA molecule. The closed circular ssDNA genome is first converted to a superhelical dsDNA. Rep binds a specific hairpin at the genome origin of replication. Introduces an endonucleolytic nick within the intergenic region of the genome, thereby initiating the rolling circle replication (RCR). Following cleavage, binds covalently to the 5'-phosphate of DNA as a tyrosyl ester. The cleavage gives rise to a free 3'-OH that serves as a primer for the cellular DNA polymerase. The polymerase synthesizes the (+) strand DNA by rolling circle mechanism. After one round of replication, a Rep-catalyzed nucleotidyl transfer reaction releases a circular single-stranded virus genome, thereby terminating the replication. Displays origin-specific DNA cleavage, nucleotidyl transferase, ATPase and helicase activities. The protein is Para-Rep C9 (C9) of Faba bean necrotic yellows C9 alphasatellite (FBNYC9A).